A 43-amino-acid chain; its full sequence is Augerpeptide hhe9.2 (43 aa).

The EGF-like domain occupies 2 to 40 (EEVGCFPNVCKNDGNCSIETSTGMTRCQCLEGYTGHVCE). 3 disulfides stabilise this stretch: cysteine 6-cysteine 28, cysteine 11-cysteine 30, and cysteine 17-cysteine 39.

In terms of tissue distribution, expressed by the venom duct.

Its subcellular location is the secreted. This chain is Augerpeptide hhe9.2, found in Hastula hectica (Sea snail).